Reading from the N-terminus, the 251-residue chain is 3-dehydroquinate dehydratase (251 aa).

3-dehydroquinate is bound by residues 47–49 (EWR) and Arg-83. The active-site Proton donor/acceptor is the His-144. Catalysis depends on Lys-171, which acts as the Schiff-base intermediate with substrate. 3 residues coordinate 3-dehydroquinate: Arg-214, Ser-233, and Gln-237.

Belongs to the type-I 3-dehydroquinase family. As to quaternary structure, homodimer.

It carries out the reaction 3-dehydroquinate = 3-dehydroshikimate + H2O. The protein operates within metabolic intermediate biosynthesis; chorismate biosynthesis; chorismate from D-erythrose 4-phosphate and phosphoenolpyruvate: step 3/7. In terms of biological role, involved in the third step of the chorismate pathway, which leads to the biosynthesis of aromatic amino acids. Catalyzes the cis-dehydration of 3-dehydroquinate (DHQ) and introduces the first double bond of the aromatic ring to yield 3-dehydroshikimate. This chain is 3-dehydroquinate dehydratase, found in Klebsiella pneumoniae subsp. pneumoniae (strain ATCC 700721 / MGH 78578).